Reading from the N-terminus, the 761-residue chain is Phosphoribosylformylglycinamidine synthase subunit PurL (761 aa).

The active site involves H49. Residues Y52 and K92 each coordinate ATP. Mg(2+) is bound at residue E94. Substrate is bound by residues 95-98 (SHNH) and R117. H96 acts as the Proton acceptor in catalysis. Position 118 (D118) interacts with Mg(2+). Substrate is bound at residue Q241. D269 is a Mg(2+) binding site. 318–320 (ESQ) contacts substrate. ATP is bound by residues N502 and G539. N540 is a Mg(2+) binding site. Substrate is bound at residue S542.

The protein belongs to the FGAMS family. Monomer. Part of the FGAM synthase complex composed of 1 PurL, 1 PurQ and 2 PurS subunits.

Its subcellular location is the cytoplasm. The catalysed reaction is N(2)-formyl-N(1)-(5-phospho-beta-D-ribosyl)glycinamide + L-glutamine + ATP + H2O = 2-formamido-N(1)-(5-O-phospho-beta-D-ribosyl)acetamidine + L-glutamate + ADP + phosphate + H(+). Its pathway is purine metabolism; IMP biosynthesis via de novo pathway; 5-amino-1-(5-phospho-D-ribosyl)imidazole from N(2)-formyl-N(1)-(5-phospho-D-ribosyl)glycinamide: step 1/2. Its function is as follows. Part of the phosphoribosylformylglycinamidine synthase complex involved in the purines biosynthetic pathway. Catalyzes the ATP-dependent conversion of formylglycinamide ribonucleotide (FGAR) and glutamine to yield formylglycinamidine ribonucleotide (FGAM) and glutamate. The FGAM synthase complex is composed of three subunits. PurQ produces an ammonia molecule by converting glutamine to glutamate. PurL transfers the ammonia molecule to FGAR to form FGAM in an ATP-dependent manner. PurS interacts with PurQ and PurL and is thought to assist in the transfer of the ammonia molecule from PurQ to PurL. This is Phosphoribosylformylglycinamidine synthase subunit PurL from Chlorobium chlorochromatii (strain CaD3).